The sequence spans 679 residues: Genome polyprotein (679 aa).

Residues 1–14 (SAGMIIMLIPTVMA) constitute a propeptide, ER anchor for the capsid protein C, removed in mature form by serine protease NS3. The chain crosses the membrane as a helical span at residues 2–22 (AGMIIMLIPTVMAFHLTTRNG). Topologically, residues 23-138 (EPHMIVSRQE…GAWKHAQRIE (116 aa)) are extracellular. Residue N83 is glycosylated (N-linked (GlcNAc...) asparagine; by host). The chain crosses the membrane as a helical span at residues 139–159 (IWILRHPGFTIMAAILAYTIG). Residues 160 to 165 (TTHFQR) are Cytoplasmic-facing. A helical membrane pass occupies residues 166 to 180 (ALIFILLTAVAPSMT). Topologically, residues 181–625 (MRCIGISNRD…LHQVFGAIYG (445 aa)) are extracellular. Intrachain disulfides connect C183-C210, C240-C301, C254-C285, and C272-C296. An N-linked (GlcNAc...) asparagine; by host glycan is attached at N247. The tract at residues 278 to 291 (DRGWGNGCGLFGKG) is fusion peptide. N333 carries N-linked (GlcNAc...) asparagine; by host glycosylation. Intrachain disulfides connect C365–C465 and C482–C513. Residues 626–646 (AAFSGVSWTMKILIGVIITWI) traverse the membrane as a helical segment. Over 647-652 (GMNSRS) the chain is Cytoplasmic. The chain crosses the membrane as a helical span at residues 653–673 (TSLSVSLVLVGIVTLYLGVMV). Topologically, residues 674 to 679 (QADSGC) are extracellular.

Forms heterodimers with envelope protein E in the endoplasmic reticulum and Golgi. In terms of assembly, homodimer; in the endoplasmic reticulum and Golgi. Interacts with protein prM. Interacts with non-structural protein 1. In terms of processing, cleaved in post-Golgi vesicles by a host furin, releasing the mature small envelope protein M, and peptide pr. This cleavage is incomplete as up to 30% of viral particles still carry uncleaved prM. N-glycosylated. Post-translationally, N-glycosylated. The excreted form is glycosylated and this is required for efficient secretion of the protein from infected cells. In terms of processing, specific enzymatic cleavages in vivo yield mature proteins. Cleavages in the lumen of endoplasmic reticulum are performed by host signal peptidase, wereas cleavages in the cytoplasmic side are performed by serine protease NS3. Signal cleavage at the 2K-4B site requires a prior NS3 protease-mediated cleavage at the 4A-2K site.

Its subcellular location is the secreted. It localises to the virion membrane. The protein resides in the host endoplasmic reticulum membrane. In terms of biological role, prevents premature fusion activity of envelope proteins in trans-Golgi by binding to envelope protein E at pH6.0. After virion release in extracellular space, gets dissociated from E dimers. Functionally, acts as a chaperone for envelope protein E during intracellular virion assembly by masking and inactivating envelope protein E fusion peptide. prM is the only viral peptide matured by host furin in the trans-Golgi network probably to avoid catastrophic activation of the viral fusion activity in acidic Golgi compartment prior to virion release. prM-E cleavage is inefficient, and many virions are only partially matured. These uncleaved prM would play a role in immune evasion. Its function is as follows. May play a role in virus budding. Exerts cytotoxic effects by activating a mitochondrial apoptotic pathway through M ectodomain. May display a viroporin activity. Binds to host cell surface receptor and mediates fusion between viral and cellular membranes. Envelope protein is synthesized in the endoplasmic reticulum in the form of heterodimer with protein prM. They play a role in virion budding in the ER, and the newly formed immature particle is covered with 60 spikes composed of heterodimer between precursor prM and envelope protein E. The virion is transported to the Golgi apparatus where the low pH causes dissociation of PrM-E heterodimers and formation of E homodimers. prM-E cleavage is inefficient, and many virions are only partially matured. These uncleaved prM would play a role in immune evasion. In terms of biological role, involved in immune evasion, pathogenesis and viral replication. Once cleaved off the polyprotein, is targeted to three destinations: the viral replication cycle, the plasma membrane and the extracellular compartment. Essential for viral replication. Required for formation of the replication complex and recruitment of other non-structural proteins to the ER-derived membrane structures. Excreted as a hexameric lipoparticle that plays a role against host immune response. Antagonizing the complement function. Binds to the host macrophages and dendritic cells. Inhibits signal transduction originating from Toll-like receptor 3 (TLR3). Functionally, disrupts the host endothelial glycocalyx layer of host pulmonary microvascular endothelial cells, inducing degradation of sialic acid and shedding of heparan sulfate proteoglycans. NS1 induces expression of sialidases, heparanase, and activates cathepsin L, which activates heparanase via enzymatic cleavage. These effects are probably linked to the endothelial hyperpermeability observed in severe dengue disease. The protein is Genome polyprotein of Dengue virus type 2 (strain Thailand/PUO-218/1980) (DENV-2).